The chain runs to 328 residues: Probable cell division protein WhiA (328 aa).

A DNA-binding region (H-T-H motif) is located at residues 275-308 (SLEELGRLAEPPMTKDAVAGRIRRLLSMADKRAE).

The protein belongs to the WhiA family.

Functionally, involved in cell division and chromosome segregation. This chain is Probable cell division protein WhiA, found in Corynebacterium jeikeium (strain K411).